We begin with the raw amino-acid sequence, 557 residues long: Hyaluronan synthase 3 (557 aa).

Residues 1-10 (MPGKFQTGLR) are Cytoplasmic-facing. A helical membrane pass occupies residues 11 to 31 (VLATCLFALLVLGGILVAYVT). The Extracellular segment spans residues 32-44 (GYQFIHTDRHHLS). Residues 45-65 (FGLYGAILGLHLLSQSLFAFL) form a helical membrane-spanning segment. The Cytoplasmic segment spans residues 66–367 (EHRKMRGGGR…NALWFHKHHL (302 aa)). Residues 368–388 (WMTYESVVTGFFPFFLVATVV) traverse the membrane as a helical segment. Residues 389 to 398 (QLFYRGRVWN) lie on the Extracellular side of the membrane. A helical membrane pass occupies residues 399–419 (ILLFLLTVQLVGILKATYACI). Residues 420–430 (LRGNAEMIFMS) lie on the Cytoplasmic side of the membrane. Residues 431–451 (LYSLLYMTSLLPAKIFAVITI) traverse the membrane as a helical segment. Residues 452–463 (KKSGWGTSGRRK) lie on the Extracellular side of the membrane. The helical transmembrane segment at 464 to 484 (LVVNFMGMVPVSVWFCILLGG) threads the bilayer. Residues 485-501 (LVYTAYCQSHDPFTETE) are Cytoplasmic-facing. A helical transmembrane segment spans residues 502–522 (LLFLLTGAILYGCYWVALLSL). Residues 523–557 (YLALIARRCGKRQELYNLALEEVSEPEPAAKAIKP) are Extracellular-facing.

This sequence belongs to the NodC/HAS family. Mg(2+) serves as cofactor. O-GlcNAcylation increases the hyaluronan synthase activity, HAS3 stability and its plasma membrane residence. The concentration of UDP-GlcNAc controls the level of O-GlcNAc modification.

The protein localises to the cell membrane. Its subcellular location is the golgi apparatus membrane. The protein resides in the golgi apparatus. It is found in the trans-Golgi network membrane. It localises to the cytoplasmic vesicle. The enzyme catalyses [hyaluronan](n) + UDP-N-acetyl-alpha-D-glucosamine = N-acetyl-beta-D-glucosaminyl-(1-&gt;4)-[hyaluronan](n) + UDP + H(+). It carries out the reaction N-acetyl-beta-D-glucosaminyl-(1-&gt;4)-[hyaluronan](n) + UDP-alpha-D-glucuronate = [hyaluronan](n+1) + UDP + H(+). The protein operates within glycan biosynthesis; hyaluronan biosynthesis. In terms of biological role, catalyzes the addition of GlcNAc or GlcUA monosaccharides to the nascent hyaluronan polymer. Therefore, it is essential to hyaluronan synthesis a major component of most extracellular matrices that has a structural role in tissues architectures and regulates cell adhesion, migration and differentiation. This is one of three isoenzymes responsible for cellular hyaluronan synthesis. This Xenopus laevis (African clawed frog) protein is Hyaluronan synthase 3 (has3).